A 252-amino-acid polypeptide reads, in one-letter code: MALTVLAATALTALIMGKNNGTLMDHDKVKPFAQPIPTNSFEEAAVKYKPELFVSYGCHPYPAVQANGSVSAGLEGSGPDDGECKGSRLGSQVYSRSDWYNDKWAIMYTWYLPKGRSGKLQDRHFWETAVIWIDDPTLEDSKLLGVSLNYEDRRVSKIAIKGRHLNASKVLKFESYEAEKSPKPRLRFTEKAGKTQDLITWDQLPAKARKGLSTTKFYSSPFGSVKREMPLKDEVFLKRLKDAWPFSNKHDE.

The N-terminal stretch at methionine 1–glycine 17 is a signal peptide. N-linked (GlcNAc...) asparagine glycans are attached at residues asparagine 20 and asparagine 67. The short motif at glutamine 121–glutamate 127 is the Hepta-peptide GHRHDWE motif element. An N-linked (GlcNAc...) asparagine glycan is attached at asparagine 166.

The protein belongs to the Necrosis inducing protein (NPP1) family.

Its subcellular location is the secreted. Secreted effector that contributes strongly to virulence during infection by P.capsici. In Phytophthora capsici, this protein is NLP effector protein Pc118356.